A 150-amino-acid polypeptide reads, in one-letter code: 3-dehydroquinate dehydratase (150 aa).

Residue Tyr26 is the Proton acceptor of the active site. Asn77, His83, and Asp90 together coordinate substrate. Residue His103 is the Proton donor of the active site. Residues 104–105 (IS) and Arg114 each bind substrate.

This sequence belongs to the type-II 3-dehydroquinase family. Homododecamer.

It catalyses the reaction 3-dehydroquinate = 3-dehydroshikimate + H2O. Its pathway is metabolic intermediate biosynthesis; chorismate biosynthesis; chorismate from D-erythrose 4-phosphate and phosphoenolpyruvate: step 3/7. Catalyzes a trans-dehydration via an enolate intermediate. The chain is 3-dehydroquinate dehydratase from Buchnera aphidicola subsp. Acyrthosiphon pisum (strain 5A).